The sequence spans 110 residues: NADH-quinone oxidoreductase subunit K (110 aa).

3 consecutive transmembrane segments (helical) span residues 13–33, 38–58, and 70–90; these read VTHG…GIII, ILIL…NFLI, and VFVF…LAIV.

This sequence belongs to the complex I subunit 4L family. NDH-1 is composed of 14 different subunits. Subunits NuoA, H, J, K, L, M, N constitute the membrane sector of the complex.

Its subcellular location is the cell inner membrane. It carries out the reaction a quinone + NADH + 5 H(+)(in) = a quinol + NAD(+) + 4 H(+)(out). Functionally, NDH-1 shuttles electrons from NADH, via FMN and iron-sulfur (Fe-S) centers, to quinones in the respiratory chain. The immediate electron acceptor for the enzyme in this species is believed to be ubiquinone. Couples the redox reaction to proton translocation (for every two electrons transferred, four hydrogen ions are translocated across the cytoplasmic membrane), and thus conserves the redox energy in a proton gradient. The protein is NADH-quinone oxidoreductase subunit K of Francisella tularensis subsp. tularensis (strain FSC 198).